The following is a 207-amino-acid chain: Protein FMP32, mitochondrial (207 aa).

Residues 100-136 (ADRSEFHNIQNEYESVKNDLEKLRNKLREEITKTNAG) are a coiled coil. Residues 184 to 206 (VMQWLIGVCTGTFALVLAYMRLL) form a helical membrane-spanning segment.

Belongs to the CCDC90 family.

It is found in the mitochondrion. Its subcellular location is the membrane. The chain is Protein FMP32, mitochondrial (FMP32) from Saccharomyces cerevisiae (strain ATCC 204508 / S288c) (Baker's yeast).